A 273-amino-acid polypeptide reads, in one-letter code: Formamidopyrimidine-DNA glycosylase (273 aa).

Pro-2 functions as the Schiff-base intermediate with DNA in the catalytic mechanism. Glu-3 (proton donor) is an active-site residue. Catalysis depends on Lys-58, which acts as the Proton donor; for beta-elimination activity. Residues His-91, Arg-110, and Arg-153 each contribute to the DNA site. The segment at 238–272 (KVYGKEGQPCPRCGEDFVKIKISGRGTTYCLHCQK) adopts an FPG-type zinc-finger fold. The Proton donor; for delta-elimination activity role is filled by Arg-262.

The protein belongs to the FPG family. As to quaternary structure, monomer. Zn(2+) is required as a cofactor.

The enzyme catalyses Hydrolysis of DNA containing ring-opened 7-methylguanine residues, releasing 2,6-diamino-4-hydroxy-5-(N-methyl)formamidopyrimidine.. It carries out the reaction 2'-deoxyribonucleotide-(2'-deoxyribose 5'-phosphate)-2'-deoxyribonucleotide-DNA = a 3'-end 2'-deoxyribonucleotide-(2,3-dehydro-2,3-deoxyribose 5'-phosphate)-DNA + a 5'-end 5'-phospho-2'-deoxyribonucleoside-DNA + H(+). Involved in base excision repair of DNA damaged by oxidation or by mutagenic agents. Acts as a DNA glycosylase that recognizes and removes damaged bases. Has a preference for oxidized purines, such as 7,8-dihydro-8-oxoguanine (8-oxoG). Has AP (apurinic/apyrimidinic) lyase activity and introduces nicks in the DNA strand. Cleaves the DNA backbone by beta-delta elimination to generate a single-strand break at the site of the removed base with both 3'- and 5'-phosphates. This is Formamidopyrimidine-DNA glycosylase from Lactobacillus delbrueckii subsp. bulgaricus (strain ATCC 11842 / DSM 20081 / BCRC 10696 / JCM 1002 / NBRC 13953 / NCIMB 11778 / NCTC 12712 / WDCM 00102 / Lb 14).